Consider the following 504-residue polypeptide: Pre-mRNA-processing factor 19 (504 aa).

S2 carries the N-acetylserine modification. The U-box domain occupies 2–73 (SLICSISNEV…KPPSATSIPA (72 aa)). The may mediate interaction with PSMC5 stretch occupies residues 68–223 (ATSIPAILKA…VGLHSASIPG (156 aa)). An N6-acetyllysine mark is found at K122, K179, K244, and K261. The stretch at 219–259 (ASIPGILALDLCPSDTNKILTGGADKNVVVFDKSSEQILAT) is one WD 1 repeat. WD repeat units follow at residues 262 to 301 (GHTK…CVQV), 304 to 345 (AHES…TKVT), 348 to 387 (TSGC…NVAN), 390 to 429 (GHSG…NFKT), 433 to 472 (DNNF…LHFT), and 473 to 503 (EHSG…KFYS).

It belongs to the WD repeat PRP19 family. Homotetramer. Component of activated, catalytic and post-catalytic spliceosomes. Component of the Prp19 complex/PRP19C/Nineteen complex/NTC and related complexes described as PRP19-CDC5L splicing complex and PSO4 complex. A homotetramer of PRPF19, CDC5L, PLRG1 and BCAS2 constitute the core of those complexes. The interaction with CDC5L, PLRG1 and BCAS2 is direct within this core complex. At least three less stably associated proteins CTNNBL1, CWC15 and HSPA8 are found in the Prp19 complex. The Prp19 complex associates with the spliceosome during its assembly and remodeling recruiting additional proteins. Component of the XAB2 complex, a multimeric protein complex composed of XAB2, PRPF19, AQR, ZNF830, ISY1, and PPIE. Interacts with CWC22 and EIF4A3 in an RNA-independent manner. Interacts with RPA1 and RPA2; the PRP19-CDC5L complex is recruited to the sites of DNA repair where it interacts with the replication protein A complex (RPA). Interacts with SETMAR; required for SETMAR recruitment to site of DNA damage. Interacts with U2AF2; the interaction is direct and recruits the Prp19 complex to RNA polymerase II C-terminal domain (CTD) and the pre-mRNA. Interacts with PRPF3. Interacts with APEX1, DNTT and PSMB4. Interacts with PSMC5. Interacts with KNSTRN. Interacts (via N-terminus) with CDC5L. Interacts with KHDC4. Interacts with USB1. Interacts with DDX41. As to expression, ubiquitous. Weakly expressed in senescent cells of different tissue origins. Highly expressed in tumor cell lines.

It localises to the nucleus. The protein resides in the nucleoplasm. Its subcellular location is the cytoplasm. The protein localises to the cytoskeleton. It is found in the spindle. It localises to the lipid droplet. The catalysed reaction is S-ubiquitinyl-[E2 ubiquitin-conjugating enzyme]-L-cysteine + [acceptor protein]-L-lysine = [E2 ubiquitin-conjugating enzyme]-L-cysteine + N(6)-ubiquitinyl-[acceptor protein]-L-lysine.. Its pathway is protein modification; protein ubiquitination. Functionally, ubiquitin-protein ligase which is a core component of several complexes mainly involved pre-mRNA splicing and DNA repair. Required for pre-mRNA splicing as component of the spliceosome. Core component of the PRP19C/Prp19 complex/NTC/Nineteen complex which is part of the spliceosome and participates in its assembly, its remodeling and is required for its activity. During assembly of the spliceosome, mediates 'Lys-63'-linked polyubiquitination of the U4 spliceosomal protein PRPF3. Ubiquitination of PRPF3 allows its recognition by the U5 component PRPF8 and stabilizes the U4/U5/U6 tri-snRNP spliceosomal complex. Recruited to RNA polymerase II C-terminal domain (CTD) and the pre-mRNA, it may also couple the transcriptional and spliceosomal machineries. The XAB2 complex, which contains PRPF19, is also involved in pre-mRNA splicing, transcription and transcription-coupled repair. Beside its role in pre-mRNA splicing PRPF19, as part of the PRP19-CDC5L complex, plays a role in the DNA damage response/DDR. It is recruited to the sites of DNA damage by the RPA complex where PRPF19 directly ubiquitinates RPA1 and RPA2. 'Lys-63'-linked polyubiquitination of the RPA complex allows the recruitment of the ATR-ATRIP complex and the activation of ATR, a master regulator of the DNA damage response. May also play a role in DNA double-strand break (DSB) repair by recruiting the repair factor SETMAR to altered DNA. As part of the PSO4 complex may also be involved in the DNA interstrand cross-links/ICLs repair process. In addition, may also mediate 'Lys-48'-linked polyubiquitination of substrates and play a role in proteasomal degradation. May play a role in the biogenesis of lipid droplets. May play a role in neural differentiation possibly through its function as part of the spliceosome. This is Pre-mRNA-processing factor 19 from Homo sapiens (Human).